Reading from the N-terminus, the 387-residue chain is 8-amino-7-oxononanoate synthase (387 aa).

Arginine 31 and arginine 38 together coordinate substrate. 118–119 (GY) contacts pyridoxal 5'-phosphate. Residue histidine 143 coordinates substrate. Pyridoxal 5'-phosphate contacts are provided by residues serine 191, 216 to 219 (DDAH), and 236 to 239 (TLSK). The residue at position 239 (lysine 239) is an N6-(pyridoxal phosphate)lysine. Threonine 348 is a binding site for substrate.

The protein belongs to the class-II pyridoxal-phosphate-dependent aminotransferase family. BioF subfamily. As to quaternary structure, homodimer. It depends on pyridoxal 5'-phosphate as a cofactor.

It catalyses the reaction 6-carboxyhexanoyl-[ACP] + L-alanine + H(+) = (8S)-8-amino-7-oxononanoate + holo-[ACP] + CO2. The protein operates within cofactor biosynthesis; biotin biosynthesis. Catalyzes the decarboxylative condensation of pimeloyl-[acyl-carrier protein] and L-alanine to produce 8-amino-7-oxononanoate (AON), [acyl-carrier protein], and carbon dioxide. The protein is 8-amino-7-oxononanoate synthase of Methylorubrum populi (strain ATCC BAA-705 / NCIMB 13946 / BJ001) (Methylobacterium populi).